Here is a 951-residue protein sequence, read N- to C-terminus: Valine--tRNA ligase (951 aa).

The short motif at 42–52 is the 'HIGH' region element; it reads PNVTGSLHMGH. The 'KMSKS' region signature appears at 554–558; the sequence is KMSKS. An ATP-binding site is contributed by lysine 557. The stretch at 880 to 914 forms a coiled coil; sequence AGLIDKAAELDRLAKEVAKLEAEIGRIESKLSNEG.

Belongs to the class-I aminoacyl-tRNA synthetase family. ValS type 1 subfamily. In terms of assembly, monomer.

Its subcellular location is the cytoplasm. It carries out the reaction tRNA(Val) + L-valine + ATP = L-valyl-tRNA(Val) + AMP + diphosphate. Its function is as follows. Catalyzes the attachment of valine to tRNA(Val). As ValRS can inadvertently accommodate and process structurally similar amino acids such as threonine, to avoid such errors, it has a 'posttransfer' editing activity that hydrolyzes mischarged Thr-tRNA(Val) in a tRNA-dependent manner. The polypeptide is Valine--tRNA ligase (Pectobacterium atrosepticum (strain SCRI 1043 / ATCC BAA-672) (Erwinia carotovora subsp. atroseptica)).